The primary structure comprises 155 residues: Small ribosomal subunit protein uS7c (155 aa).

Belongs to the universal ribosomal protein uS7 family. In terms of assembly, part of the 30S ribosomal subunit.

The protein resides in the plastid. In terms of biological role, one of the primary rRNA binding proteins, it binds directly to 16S rRNA where it nucleates assembly of the head domain of the 30S subunit. This chain is Small ribosomal subunit protein uS7c (rps7), found in Lathraea clandestina (Purple toothwort).